The primary structure comprises 508 residues: Bifunctional purine biosynthesis protein PurH (508 aa).

Residues 1 to 145 (MTKRALISVS…KNHQYVTVIV (145 aa)) enclose the MGS-like domain.

Belongs to the PurH family.

It carries out the reaction (6R)-10-formyltetrahydrofolate + 5-amino-1-(5-phospho-beta-D-ribosyl)imidazole-4-carboxamide = 5-formamido-1-(5-phospho-D-ribosyl)imidazole-4-carboxamide + (6S)-5,6,7,8-tetrahydrofolate. The enzyme catalyses IMP + H2O = 5-formamido-1-(5-phospho-D-ribosyl)imidazole-4-carboxamide. The protein operates within purine metabolism; IMP biosynthesis via de novo pathway; 5-formamido-1-(5-phospho-D-ribosyl)imidazole-4-carboxamide from 5-amino-1-(5-phospho-D-ribosyl)imidazole-4-carboxamide (10-formyl THF route): step 1/1. Its pathway is purine metabolism; IMP biosynthesis via de novo pathway; IMP from 5-formamido-1-(5-phospho-D-ribosyl)imidazole-4-carboxamide: step 1/1. The protein is Bifunctional purine biosynthesis protein PurH of Lysinibacillus sphaericus (strain C3-41).